The primary structure comprises 309 residues: Coproporphyrin III ferrochelatase (309 aa).

Residues tyrosine 12, threonine 14, arginine 29, 45–46, serine 53, and tyrosine 124 each bind Fe-coproporphyrin III; that span reads RY. Fe(2+) is bound by residues histidine 182 and glutamate 263.

Belongs to the ferrochelatase family. In terms of assembly, monomer.

The protein resides in the cytoplasm. The catalysed reaction is Fe-coproporphyrin III + 2 H(+) = coproporphyrin III + Fe(2+). Its pathway is porphyrin-containing compound metabolism; protoheme biosynthesis. Functionally, involved in coproporphyrin-dependent heme b biosynthesis. Catalyzes the insertion of ferrous iron into coproporphyrin III to form Fe-coproporphyrin III. The sequence is that of Coproporphyrin III ferrochelatase from Listeria monocytogenes serovar 1/2a (strain ATCC BAA-679 / EGD-e).